Consider the following 201-residue polypeptide: Small ribosomal subunit protein uS5 (201 aa).

The tract at residues 1–28 is disordered; it reads MAHQNEQRGGGDRGRGRGRGRDRDQERD. One can recognise an S5 DRBM domain in the interval 31–94; it reads LVDKLVHINR…DEAKKNMIRV (64 aa). The segment at 173 to 201 is disordered; the sequence is SVAAKRGLKVGDLVNRRDDGASSPEAIEA.

It belongs to the universal ribosomal protein uS5 family. In terms of assembly, part of the 30S ribosomal subunit. Contacts proteins S4 and S8.

In terms of biological role, with S4 and S12 plays an important role in translational accuracy. Functionally, located at the back of the 30S subunit body where it stabilizes the conformation of the head with respect to the body. The chain is Small ribosomal subunit protein uS5 from Maricaulis maris (strain MCS10) (Caulobacter maris).